Here is a 131-residue protein sequence, read N- to C-terminus: Small ribosomal subunit protein uS11 (131 aa).

Belongs to the universal ribosomal protein uS11 family. Part of the 30S ribosomal subunit. Interacts with proteins S7 and S18. Binds to IF-3.

Its function is as follows. Located on the platform of the 30S subunit, it bridges several disparate RNA helices of the 16S rRNA. Forms part of the Shine-Dalgarno cleft in the 70S ribosome. The sequence is that of Small ribosomal subunit protein uS11 from Helicobacter pylori (strain P12).